The sequence spans 271 residues: GPN-loop GTPase 3 (271 aa).

A GTP-binding site is contributed by 13 to 18 (GAGKST). Positions 70-72 (GPN) match the Gly-Pro-Asn (GPN)-loop; involved in dimer interface motif. 173–176 (SKLD) contacts GTP.

Belongs to the GPN-loop GTPase family. As to quaternary structure, heterodimers with GPN1 or GPN2. Binds to RNA polymerase II (RNAPII).

Small GTPase required for proper nuclear import of RNA polymerase II and III (RNAPII and RNAPIII). May act at an RNAP assembly step prior to nuclear import. The sequence is that of GPN-loop GTPase 3 from Candida glabrata (strain ATCC 2001 / BCRC 20586 / JCM 3761 / NBRC 0622 / NRRL Y-65 / CBS 138) (Yeast).